The sequence spans 621 residues: Archaeal Lon protease (621 aa).

At 1–117 (MNEEVREILG…YKEEAMKKAQ (117 aa)) the chain is on the cytoplasmic side. Residue 54–61 (GSPGTGKS) coordinates ATP. A helical transmembrane segment spans residues 118-136 (ARNFLIFTLVFLVIGYTVL). Residues 137 to 141 (TNPGN) lie on the Extracellular side of the membrane. Residues 142-160 (LIWGIIAAVLILMMSRYFI) traverse the membrane as a helical segment. At 161–621 (PREDRNVPKL…KFKELELAAV (461 aa)) the chain is on the cytoplasmic side. Positions 423–602 (GYEVGRVNGL…NEVLEHVLED (180 aa)) constitute a Lon proteolytic domain. Residues serine 509 and lysine 552 contribute to the active site.

This sequence belongs to the peptidase S16 family. Archaeal LonB subfamily. As to quaternary structure, homohexamer. Organized in a ring with a central cavity.

It localises to the cell membrane. In terms of biological role, ATP-dependent serine protease that mediates the selective degradation of mutant and abnormal proteins as well as certain short-lived regulatory proteins. Degrades polypeptides processively. The sequence is that of Archaeal Lon protease from Archaeoglobus fulgidus (strain ATCC 49558 / DSM 4304 / JCM 9628 / NBRC 100126 / VC-16).